The sequence spans 57 residues: Aspartyl-phosphate phosphatase YnzD (57 aa).

The protein belongs to the spo0E family.

Its function is as follows. Aspartyl-phosphate phosphatase which specifically dephosphorylates the sporulation transcription factor Spo0A-P and negatively regulates the sporulation initiation pathway in order to control the proper timing of sporulation. The polypeptide is Aspartyl-phosphate phosphatase YnzD (ynzD) (Bacillus subtilis (strain 168)).